The chain runs to 182 residues: Early nodulin-like protein 14 (182 aa).

Residues 1–28 (MFLSASMASSSLHVAIFSLIFLFSLAAA) form the signal peptide. In terms of domain architecture, Phytocyanin spans 29 to 133 (NEVTVGGKSG…GQKLSLVVIS (105 aa)). Cys-87 and Cys-121 are joined by a disulfide. Asn-88 and Asn-95 each carry an N-linked (GlcNAc...) asparagine glycan. Ser-160 carries the GPI-anchor amidated serine lipid modification. Residues 161–182 (GSVRLGGCYVVLGLVLGLCAWF) constitute a propeptide, removed in mature form.

It belongs to the early nodulin-like (ENODL) family. Interacts strongly and specifically with the extracellular domain of FERONIA at the synergid cell surface. Mostly expressed in seedlings and flowers, and, to a lower extent, in roots, stems and seeds, but barely in leaves.

The protein resides in the cell membrane. Functionally, may act as a carbohydrate transporter. Required, together with ENODL11, ENODL12, ENODL13, ENODL14 and ENODL15, for male-female communication and pollen tube reception and burst at the synergid cell surface of the female gametophyte. In Arabidopsis thaliana (Mouse-ear cress), this protein is Early nodulin-like protein 14.